We begin with the raw amino-acid sequence, 364 residues long: DNA replication and repair protein RecF (364 aa).

30–37 lines the ATP pocket; it reads GENAQGKT.

It belongs to the RecF family.

It is found in the cytoplasm. The RecF protein is involved in DNA metabolism; it is required for DNA replication and normal SOS inducibility. RecF binds preferentially to single-stranded, linear DNA. It also seems to bind ATP. The chain is DNA replication and repair protein RecF from Streptococcus suis (strain 98HAH33).